Here is a 202-residue protein sequence, read N- to C-terminus: ATP-dependent Clp protease proteolytic subunit (202 aa).

The active-site Nucleophile is serine 101. Residue histidine 126 is part of the active site.

The protein belongs to the peptidase S14 family. As to quaternary structure, component of the chloroplastic Clp protease core complex.

It is found in the plastid. Its subcellular location is the chloroplast stroma. It carries out the reaction Hydrolysis of proteins to small peptides in the presence of ATP and magnesium. alpha-casein is the usual test substrate. In the absence of ATP, only oligopeptides shorter than five residues are hydrolyzed (such as succinyl-Leu-Tyr-|-NHMec, and Leu-Tyr-Leu-|-Tyr-Trp, in which cleavage of the -Tyr-|-Leu- and -Tyr-|-Trp bonds also occurs).. In terms of biological role, cleaves peptides in various proteins in a process that requires ATP hydrolysis. Has a chymotrypsin-like activity. Plays a major role in the degradation of misfolded proteins. The chain is ATP-dependent Clp protease proteolytic subunit from Acorus calamus (Sweet flag).